The sequence spans 306 residues: Glutamyl-Q tRNA(Asp) synthetase (306 aa).

L-glutamate-binding positions include Arg4–Ser8 and Glu40. A 'HIGH' region motif is present at residues Pro7–Asn17. Positions 92, 94, 113, and 117 each coordinate Zn(2+). L-glutamate-binding residues include Tyr180 and Arg198. A 'KMSKS' region motif is present at residues Arg236–Arg240. Lys239 is a binding site for ATP.

This sequence belongs to the class-I aminoacyl-tRNA synthetase family. GluQ subfamily. It depends on Zn(2+) as a cofactor.

Its function is as follows. Catalyzes the tRNA-independent activation of glutamate in presence of ATP and the subsequent transfer of glutamate onto a tRNA(Asp). Glutamate is transferred on the 2-amino-5-(4,5-dihydroxy-2-cyclopenten-1-yl) moiety of the queuosine in the wobble position of the QUC anticodon. The protein is Glutamyl-Q tRNA(Asp) synthetase of Corynebacterium efficiens (strain DSM 44549 / YS-314 / AJ 12310 / JCM 11189 / NBRC 100395).